Reading from the N-terminus, the 439-residue chain is Fibulin-7 (439 aa).

The signal sequence occupies residues 1–24 (MVPSSPRALFLLLLILACPEPRAS). Residues 28 to 53 (LSKQQLLSAIRQLQQLLKGQETRFAE) adopt a coiled-coil conformation. The Sushi domain maps to 79 to 136 (VSCPALNTPADGRKFGSKYLVDHEVHFTCNPGFRLVGPSSVVCLPNGTWTGEQPHCRG). Disulfide bonds link Cys81–Cys121, Cys107–Cys134, Cys140–Cys151, Cys145–Cys160, Cys162–Cys171, Cys228–Cys244, Cys240–Cys253, Cys255–Cys268, Cys274–Cys287, Cys281–Cys296, and Cys301–Cys318. The N-linked (GlcNAc...) asparagine glycan is linked to Asn124. One can recognise an EGF-like 1; calcium-binding domain in the interval 136–172 (GISECSSQPCQNGGTCVEGVNQYRCICPPGRTGNRCQ). The EGF-like 2; calcium-binding domain occupies 224–269 (DVNECELYGQEGRPRLCMHACVNTPGSYRCTCPGGYRTLADGKSCE). One can recognise an EGF-like 3; calcium-binding domain in the interval 270–319 (DVDECVGLQPVCPQGTTCINTGGSFQCVSPECPEGSGNVSYVKTSPFQCE). The N-linked (GlcNAc...) asparagine glycan is linked to Asn307.

The protein belongs to the fibulin family. Interacts with heparin, FBLN1, FN1 and DSPP. Preferentially binds dental mesenchyme cells and odontoblasts but not dental epithelial cells or nondental cells. Binding requires a heparan sulfate-containing receptor on the cell surface as well as an integrin. N-glycosylated.

It is found in the secreted. It localises to the extracellular space. The protein resides in the extracellular matrix. An adhesion molecule that interacts with extracellular matrix molecules in developing teeth and may play important roles in differentiation and maintenance of odontoblasts as well as in dentin formation. The protein is Fibulin-7 (FBLN7) of Homo sapiens (Human).